Here is a 208-residue protein sequence, read N- to C-terminus: Small ribosomal subunit protein uS4 (208 aa).

Residues 97-160 (SRLDNIVFRL…KKNDKIAEAL (64 aa)) form the S4 RNA-binding domain.

The protein belongs to the universal ribosomal protein uS4 family. Part of the 30S ribosomal subunit. Contacts protein S5. The interaction surface between S4 and S5 is involved in control of translational fidelity.

Its function is as follows. One of the primary rRNA binding proteins, it binds directly to 16S rRNA where it nucleates assembly of the body of the 30S subunit. With S5 and S12 plays an important role in translational accuracy. The sequence is that of Small ribosomal subunit protein uS4 from Mesoplasma florum (strain ATCC 33453 / NBRC 100688 / NCTC 11704 / L1) (Acholeplasma florum).